The chain runs to 130 residues: Small ribosomal subunit protein uS9 (130 aa).

The disordered stretch occupies residues 105-130 (TRDPRMKERKKYGLKKARRAPQFSKR). Positions 111–130 (KERKKYGLKKARRAPQFSKR) are enriched in basic residues.

Belongs to the universal ribosomal protein uS9 family.

This chain is Small ribosomal subunit protein uS9, found in Acetivibrio thermocellus (strain ATCC 27405 / DSM 1237 / JCM 9322 / NBRC 103400 / NCIMB 10682 / NRRL B-4536 / VPI 7372) (Clostridium thermocellum).